The primary structure comprises 96 residues: Co-chaperonin GroES (96 aa).

This sequence belongs to the GroES chaperonin family. As to quaternary structure, heptamer of 7 subunits arranged in a ring. Interacts with the chaperonin GroEL.

It localises to the cytoplasm. Together with the chaperonin GroEL, plays an essential role in assisting protein folding. The GroEL-GroES system forms a nano-cage that allows encapsulation of the non-native substrate proteins and provides a physical environment optimized to promote and accelerate protein folding. GroES binds to the apical surface of the GroEL ring, thereby capping the opening of the GroEL channel. In Polynucleobacter necessarius subsp. necessarius (strain STIR1), this protein is Co-chaperonin GroES.